The following is a 662-amino-acid chain: Protein transport Sec1b (662 aa).

Belongs to the STXBP/unc-18/SEC1 family.

Involved in the vesicle trafficking. Binds syntaxins. The sequence is that of Protein transport Sec1b (SEC1B) from Arabidopsis thaliana (Mouse-ear cress).